Here is a 391-residue protein sequence, read N- to C-terminus: Phosphopentomutase (391 aa).

Asp12, Asp285, His290, Asp326, His327, and His338 together coordinate Mn(2+).

Belongs to the phosphopentomutase family. Mn(2+) is required as a cofactor.

It localises to the cytoplasm. It catalyses the reaction 2-deoxy-alpha-D-ribose 1-phosphate = 2-deoxy-D-ribose 5-phosphate. The catalysed reaction is alpha-D-ribose 1-phosphate = D-ribose 5-phosphate. The protein operates within carbohydrate degradation; 2-deoxy-D-ribose 1-phosphate degradation; D-glyceraldehyde 3-phosphate and acetaldehyde from 2-deoxy-alpha-D-ribose 1-phosphate: step 1/2. In terms of biological role, isomerase that catalyzes the conversion of deoxy-ribose 1-phosphate (dRib-1-P) and ribose 1-phosphate (Rib-1-P) to deoxy-ribose 5-phosphate (dRib-5-P) and ribose 5-phosphate (Rib-5-P), respectively. The protein is Phosphopentomutase of Herpetosiphon aurantiacus (strain ATCC 23779 / DSM 785 / 114-95).